The primary structure comprises 485 residues: Ribosomal protein uS12 methylthiotransferase RimO (485 aa).

The region spanning 37–147 is the MTTase N-terminal domain; it reads SRIGFVSLGC…VVEQVHEHLP (111 aa). Residues Cys46, Cys82, Cys111, Cys179, Cys183, and Cys186 each coordinate [4Fe-4S] cluster. Positions 165 to 402 constitute a Radical SAM core domain; it reads LTPRHYAYLK…MEVQGEISAA (238 aa). One can recognise a TRAM domain in the interval 405–471; it reads KARIGNEYQV…EHDVWAVLSE (67 aa).

Belongs to the methylthiotransferase family. RimO subfamily. Requires [4Fe-4S] cluster as cofactor.

It is found in the cytoplasm. It carries out the reaction L-aspartate(89)-[ribosomal protein uS12]-hydrogen + (sulfur carrier)-SH + AH2 + 2 S-adenosyl-L-methionine = 3-methylsulfanyl-L-aspartate(89)-[ribosomal protein uS12]-hydrogen + (sulfur carrier)-H + 5'-deoxyadenosine + L-methionine + A + S-adenosyl-L-homocysteine + 2 H(+). Its function is as follows. Catalyzes the methylthiolation of an aspartic acid residue of ribosomal protein uS12. The protein is Ribosomal protein uS12 methylthiotransferase RimO of Alteromonas mediterranea (strain DSM 17117 / CIP 110805 / LMG 28347 / Deep ecotype).